Reading from the N-terminus, the 310-residue chain is Ferredoxin--NADP reductase (310 aa).

FAD is bound by residues aspartate 26, glutamine 34, tyrosine 39, valine 78, phenylalanine 108, aspartate 268, and threonine 308.

This sequence belongs to the ferredoxin--NADP reductase type 2 family. As to quaternary structure, homodimer. It depends on FAD as a cofactor.

It catalyses the reaction 2 reduced [2Fe-2S]-[ferredoxin] + NADP(+) + H(+) = 2 oxidized [2Fe-2S]-[ferredoxin] + NADPH. This is Ferredoxin--NADP reductase from Lactobacillus helveticus (strain DPC 4571).